We begin with the raw amino-acid sequence, 133 residues long: uncharacterized protein (133 aa).

Transmembrane regions (helical) follow at residues 8-28 and 46-66; these read MVLL…LLLL and SFSI…SIGA.

It is found in the membrane. This is an uncharacterized protein from Saccharomyces cerevisiae (strain ATCC 204508 / S288c) (Baker's yeast).